We begin with the raw amino-acid sequence, 87 residues long: HssA/B-like protein 8 (87 aa).

The span at 1-22 (MSILSALTSISNPMKSTKSSVA) shows a compositional bias: polar residues. Residues 1–24 (MSILSALTSISNPMKSTKSSVANG) form a disordered region.

The protein belongs to the hssA/B family.

The chain is HssA/B-like protein 8 (hssl8) from Dictyostelium discoideum (Social amoeba).